A 417-amino-acid polypeptide reads, in one-letter code: Serine--tRNA ligase (417 aa).

232-234 (TAE) contacts L-serine. ATP contacts are provided by residues 263 to 265 (RRE) and Val279. Glu286 contacts L-serine. Residue 350–353 (EISS) coordinates ATP. Ser385 is a binding site for L-serine.

The protein belongs to the class-II aminoacyl-tRNA synthetase family. Type-1 seryl-tRNA synthetase subfamily. In terms of assembly, homodimer. The tRNA molecule binds across the dimer.

Its subcellular location is the cytoplasm. It carries out the reaction tRNA(Ser) + L-serine + ATP = L-seryl-tRNA(Ser) + AMP + diphosphate + H(+). It catalyses the reaction tRNA(Sec) + L-serine + ATP = L-seryl-tRNA(Sec) + AMP + diphosphate + H(+). The protein operates within aminoacyl-tRNA biosynthesis; selenocysteinyl-tRNA(Sec) biosynthesis; L-seryl-tRNA(Sec) from L-serine and tRNA(Sec): step 1/1. In terms of biological role, catalyzes the attachment of serine to tRNA(Ser). Is also able to aminoacylate tRNA(Sec) with serine, to form the misacylated tRNA L-seryl-tRNA(Sec), which will be further converted into selenocysteinyl-tRNA(Sec). This is Serine--tRNA ligase from Leptospira interrogans serogroup Icterohaemorrhagiae serovar copenhageni (strain Fiocruz L1-130).